We begin with the raw amino-acid sequence, 225 residues long: Small ribosomal subunit protein mS26 (225 aa).

The protein belongs to the mitochondrion-specific ribosomal protein mS26 family. In terms of assembly, component of the mitochondrial ribosome small subunit (28S) which comprises a 12S rRNA and about 30 distinct proteins.

The protein localises to the mitochondrion. The protein is Small ribosomal subunit protein mS26 (mRpS26) of Drosophila melanogaster (Fruit fly).